Consider the following 403-residue polypeptide: S-adenosylmethionine:tRNA ribosyltransferase-isomerase (403 aa).

This sequence belongs to the QueA family. As to quaternary structure, monomer.

The protein localises to the cytoplasm. The catalysed reaction is 7-aminomethyl-7-carbaguanosine(34) in tRNA + S-adenosyl-L-methionine = epoxyqueuosine(34) in tRNA + adenine + L-methionine + 2 H(+). It participates in tRNA modification; tRNA-queuosine biosynthesis. Functionally, transfers and isomerizes the ribose moiety from AdoMet to the 7-aminomethyl group of 7-deazaguanine (preQ1-tRNA) to give epoxyqueuosine (oQ-tRNA). The polypeptide is S-adenosylmethionine:tRNA ribosyltransferase-isomerase (Psychrobacter arcticus (strain DSM 17307 / VKM B-2377 / 273-4)).